The chain runs to 533 residues: Probable lipid II flippase MurJ (533 aa).

A run of 13 helical transmembrane segments spans residues 25–45, 90–110, 131–151, 158–178, 192–212, 233–253, 274–294, 316–336, 350–370, 389–409, 412–432, 449–469, and 484–504; these read ETLMAAALGTGPMADVFYAAF, VLFSVLLLITIVMELAMPLLV, LAAVMFPYLMSMSLTAMMSGM, FFAAAVAPIFLNLVMISALFY, YLSWSVLVAGVLQLAVVYIGV, LLLLAIPAAITGGVTQINLVI, IYQLPLGVVGVAVGIVLLPEL, FVLFLTLPAAVALWLLSDDII, TTLVGSILAIFGLGLPAFVLI, YTAIAVAVNSALSILLFPVLA, GIALAEAVAGWLNAVQLFVTL, AMLLVSSAVMGGVIVYLSHRW, and GVLGLLILIAMAVYFIVAFLI.

Belongs to the MurJ/MviN family.

It localises to the cell inner membrane. It functions in the pathway cell wall biogenesis; peptidoglycan biosynthesis. Involved in peptidoglycan biosynthesis. Transports lipid-linked peptidoglycan precursors from the inner to the outer leaflet of the cytoplasmic membrane. The protein is Probable lipid II flippase MurJ of Rhizobium tropici.